The chain runs to 296 residues: Putative peptide transport system permease protein BRA1093/BS1330_II1085 (296 aa).

6 helical membrane passes run 35 to 55 (IGLV…WITN), 97 to 117 (LWIG…IGIA), 131 to 151 (VMDA…SAAL), 205 to 225 (ILPN…AYAI), 229 to 249 (ATLS…GSIV), and 260 to 280 (WWIM…INLI). Residues 97–281 (LWIGLTVAVL…ISALAINLIG (185 aa)) form the ABC transmembrane type-1 domain.

This sequence belongs to the binding-protein-dependent transport system permease family. As to quaternary structure, the complex is composed of two ATP-binding proteins (BRA1094), two transmembrane proteins (BRA1092 and BRA1093) and a solute-binding protein (BRA1090).

Its subcellular location is the cell inner membrane. Probably part of an ABC transporter complex that could be involved in peptide import. Probably responsible for the translocation of the substrate across the membrane. In Brucella suis biovar 1 (strain 1330), this protein is Putative peptide transport system permease protein BRA1093/BS1330_II1085.